Consider the following 354-residue polypeptide: UDP-N-acetylglucosamine--N-acetylmuramyl-(pentapeptide) pyrophosphoryl-undecaprenol N-acetylglucosamine transferase 1 (354 aa).

UDP-N-acetyl-alpha-D-glucosamine is bound by residues 12 to 14 (TAG), Arg163, Ser193, and Gln287.

The protein belongs to the glycosyltransferase 28 family. MurG subfamily.

The protein localises to the cell membrane. It catalyses the reaction di-trans,octa-cis-undecaprenyl diphospho-N-acetyl-alpha-D-muramoyl-L-alanyl-D-glutamyl-meso-2,6-diaminopimeloyl-D-alanyl-D-alanine + UDP-N-acetyl-alpha-D-glucosamine = di-trans,octa-cis-undecaprenyl diphospho-[N-acetyl-alpha-D-glucosaminyl-(1-&gt;4)]-N-acetyl-alpha-D-muramoyl-L-alanyl-D-glutamyl-meso-2,6-diaminopimeloyl-D-alanyl-D-alanine + UDP + H(+). It participates in cell wall biogenesis; peptidoglycan biosynthesis. Cell wall formation. Catalyzes the transfer of a GlcNAc subunit on undecaprenyl-pyrophosphoryl-MurNAc-pentapeptide (lipid intermediate I) to form undecaprenyl-pyrophosphoryl-MurNAc-(pentapeptide)GlcNAc (lipid intermediate II). The polypeptide is UDP-N-acetylglucosamine--N-acetylmuramyl-(pentapeptide) pyrophosphoryl-undecaprenol N-acetylglucosamine transferase 1 (Bacillus thuringiensis (strain Al Hakam)).